Reading from the N-terminus, the 594-residue chain is Developmental and secondary metabolism regulator veA (594 aa).

The Velvet domain maps to 24 to 220 (GRRLFYRIDV…AEQGTRVRIR (197 aa)). The Nuclear localization signal signature appears at 38-43 (EKCRAC). Disordered stretches follow at residues 40–59 (CRAC…VDPP) and 210–558 (MAEQ…DVEE). Residues 217–229 (VRIRRDVRMRRRD) are compositionally biased toward basic residues. The span at 296–307 (APPPPNPPPPGF) shows a compositional bias: pro residues. Low complexity predominate over residues 327-351 (SHSQYQQPTSSSSSSEQVSSVPQSP). Residues 352–362 (AYSSHAAQQHY) show a composition bias toward polar residues. The segment covering 374 to 383 (PERRLSDHRS) has biased composition (basic and acidic residues). The segment covering 384 to 403 (SQPNNHPQQSPHQHSYSHRS) has biased composition (low complexity). The span at 405–416 (PQRERFMPDSRR) shows a compositional bias: basic and acidic residues. The interval 457–506 (VADTQATPHLPPIRWPRPNMNLPSPPSEHQEALQPLQPAPLHYESQTHQQ) is PEST. Positions 523-538 (YSYGYSYSHNHSHGYG) are enriched in low complexity.

It belongs to the velvet family. VeA subfamily. As to quaternary structure, component of the heterotrimeric velvet complex composed of LAEA, VEA and VELB; VEA acting as a bridging protein between LAEA and VELB.

The protein resides in the nucleus. The protein localises to the cytoplasm. Its function is as follows. Component of the velvet transcription factor complex that controls sexual/asexual developmental ratio in response to light, promoting sexual development in the darkness while stimulating asexual sporulation under illumination. The velvet complex acts as a global regulator for secondary metabolite gene expression. Regulates of the response to reactive oxygen species (ROS) stress. The polypeptide is Developmental and secondary metabolism regulator veA (Pyricularia oryzae (strain 70-15 / ATCC MYA-4617 / FGSC 8958) (Rice blast fungus)).